The primary structure comprises 173 residues: NADH-quinone oxidoreductase subunit I 1 (173 aa).

2 4Fe-4S ferredoxin-type domains span residues 41-73 (IVLTRDPDGQERCVACNLCAVACPVGCIDLAKA) and 83-112 (EHFRINFARCIFCGYCEEACPTAAIQLTPD). Residues cysteine 53, cysteine 56, cysteine 59, cysteine 63, cysteine 92, cysteine 95, cysteine 98, and cysteine 102 each contribute to the [4Fe-4S] cluster site.

It belongs to the complex I 23 kDa subunit family. NDH-1 is composed of 14 different subunits. Subunits NuoA, H, J, K, L, M, N constitute the membrane sector of the complex. The cofactor is [4Fe-4S] cluster.

Its subcellular location is the cell inner membrane. The catalysed reaction is a quinone + NADH + 5 H(+)(in) = a quinol + NAD(+) + 4 H(+)(out). Its function is as follows. NDH-1 shuttles electrons from NADH, via FMN and iron-sulfur (Fe-S) centers, to quinones in the respiratory chain. The immediate electron acceptor for the enzyme in this species is believed to be ubiquinone. Couples the redox reaction to proton translocation (for every two electrons transferred, four hydrogen ions are translocated across the cytoplasmic membrane), and thus conserves the redox energy in a proton gradient. This Rhodopseudomonas palustris (strain BisA53) protein is NADH-quinone oxidoreductase subunit I 1.